We begin with the raw amino-acid sequence, 262 residues long: MANLNWSYEGENGPEHWSKLYPIANGDNQSPIDIKTKEVKHDASLKPISVSYNPATAKEIVNVSHNFQVNFEDKDNQSVLKGGPFTGSFRLRQFHFHWGTADDHGSEHTVDGVKYSSELHIVHWNSEKYSSFSEAAEKPDGLAIIAVFIKAGQANPGLQKVIDALSSIKTKGKKAPFANFDPSLLIPQSSDYWSYHGSLTHPPLHESVTWIIYREPISASSEQLAKFRSLLSTAEGEKASSILHNHRLPQPLKGRQVKASFK.

At Ala-2 the chain carries N-acetylalanine. The Alpha-carbonic anhydrase domain occupies 4-261 (LNWSYEGENG…LKGRQVKASF (258 aa)). The Proton donor/acceptor role is filled by His-65. Zn(2+)-binding residues include His-95, His-97, and His-120. Residues Thr-200 and 200 to 201 (TH) each bind substrate.

The protein belongs to the alpha-carbonic anhydrase family. Requires Zn(2+) as cofactor.

The protein localises to the cytoplasm. The catalysed reaction is hydrogencarbonate + H(+) = CO2 + H2O. It carries out the reaction urea = cyanamide + H2O. Inhibited by acetazolamide. Catalyzes the reversible hydration of carbon dioxide. Can hydrate cyanamide to urea. The chain is Carbonic anhydrase 1 (CA1) from Monodelphis domestica (Gray short-tailed opossum).